The chain runs to 129 residues: Lysozyme C (129 aa).

The 129-residue stretch at 1-129 folds into the C-type lysozyme domain; it reads KVYGRCELAA…VHAWIRGCRL (129 aa). 4 cysteine pairs are disulfide-bonded: Cys-6–Cys-127, Cys-30–Cys-115, Cys-64–Cys-80, and Cys-76–Cys-94. Residues Glu-35 and Asp-52 contribute to the active site.

The protein belongs to the glycosyl hydrolase 22 family. Monomer.

The protein localises to the secreted. The enzyme catalyses Hydrolysis of (1-&gt;4)-beta-linkages between N-acetylmuramic acid and N-acetyl-D-glucosamine residues in a peptidoglycan and between N-acetyl-D-glucosamine residues in chitodextrins.. Lysozymes have primarily a bacteriolytic function; those in tissues and body fluids are associated with the monocyte-macrophage system and enhance the activity of immunoagents. The protein is Lysozyme C (LYZ) of Lophophorus impejanus (Himalayan monal pheasant).